The chain runs to 533 residues: Na(+)/H(+) antiporter NhaB (533 aa).

11 helical membrane passes run 10-30 (IGNF…SFLI), 67-87 (PGGL…SQVL), 96-116 (VLLL…LLLF), 131-165 (VSLM…FYSI), 209-229 (LLMH…VGEP), 247-267 (IRMS…CFLV), 310-330 (AFVG…VGLI), 355-375 (EEAL…AVII), 396-416 (LVIF…VFVG), 454-474 (ATPN…APLI), and 481-501 (MVWM…MAIE).

The protein belongs to the NhaB Na(+)/H(+) (TC 2.A.34) antiporter family.

Its subcellular location is the cell inner membrane. The catalysed reaction is 2 Na(+)(in) + 3 H(+)(out) = 2 Na(+)(out) + 3 H(+)(in). Its function is as follows. Na(+)/H(+) antiporter that extrudes sodium in exchange for external protons. The polypeptide is Na(+)/H(+) antiporter NhaB (Shewanella sp. (strain MR-4)).